We begin with the raw amino-acid sequence, 269 residues long: Rhamnulose-1-phosphate aldolase (269 aa).

Glutamate 119 is a catalytic residue. 3 residues coordinate Zn(2+): histidine 142, histidine 144, and histidine 214.

The protein belongs to the aldolase class II family. RhaD subfamily. It depends on Zn(2+) as a cofactor.

It localises to the cytoplasm. The catalysed reaction is L-rhamnulose 1-phosphate = (S)-lactaldehyde + dihydroxyacetone phosphate. It participates in carbohydrate degradation; L-rhamnose degradation; glycerone phosphate from L-rhamnose: step 3/3. Functionally, catalyzes the reversible cleavage of L-rhamnulose-1-phosphate to dihydroxyacetone phosphate (DHAP) and L-lactaldehyde. This chain is Rhamnulose-1-phosphate aldolase, found in Bacteroides thetaiotaomicron (strain ATCC 29148 / DSM 2079 / JCM 5827 / CCUG 10774 / NCTC 10582 / VPI-5482 / E50).